We begin with the raw amino-acid sequence, 232 residues long: uncharacterized protein (232 aa).

7 helical membrane-spanning segments follow: residues 17-37 (FLAK…VFAY), 54-74 (MSFM…SGAL), 84-104 (ALFL…FMIY), 107-127 (GSIV…SVYG), 138-158 (GSYL…NMFF), 161-181 (SGLN…LTAY), and 203-223 (MAVV…LYLL).

It belongs to the BI1 family.

Its subcellular location is the cell membrane. This is an uncharacterized protein from Borreliella burgdorferi (strain ATCC 35210 / DSM 4680 / CIP 102532 / B31) (Borrelia burgdorferi).